The sequence spans 489 residues: Protein nucleotidyltransferase YdiU (489 aa).

ATP contacts are provided by Gly-88, Gly-90, Arg-91, Lys-111, Asp-123, Gly-124, Arg-174, and Arg-181. The Proton acceptor role is filled by Asp-250. 2 residues coordinate Mg(2+): Asn-251 and Asp-260. Asp-260 contributes to the ATP binding site.

The protein belongs to the SELO family. It depends on Mg(2+) as a cofactor. Mn(2+) serves as cofactor.

It catalyses the reaction L-seryl-[protein] + ATP = 3-O-(5'-adenylyl)-L-seryl-[protein] + diphosphate. The enzyme catalyses L-threonyl-[protein] + ATP = 3-O-(5'-adenylyl)-L-threonyl-[protein] + diphosphate. It carries out the reaction L-tyrosyl-[protein] + ATP = O-(5'-adenylyl)-L-tyrosyl-[protein] + diphosphate. The catalysed reaction is L-histidyl-[protein] + UTP = N(tele)-(5'-uridylyl)-L-histidyl-[protein] + diphosphate. It catalyses the reaction L-seryl-[protein] + UTP = O-(5'-uridylyl)-L-seryl-[protein] + diphosphate. The enzyme catalyses L-tyrosyl-[protein] + UTP = O-(5'-uridylyl)-L-tyrosyl-[protein] + diphosphate. Functionally, nucleotidyltransferase involved in the post-translational modification of proteins. It can catalyze the addition of adenosine monophosphate (AMP) or uridine monophosphate (UMP) to a protein, resulting in modifications known as AMPylation and UMPylation. This is Protein nucleotidyltransferase YdiU from Vibrio parahaemolyticus serotype O3:K6 (strain RIMD 2210633).